Reading from the N-terminus, the 319-residue chain is GATA transcription factor 18 (319 aa).

Positions 1 to 15 (MPDAAAAAAAAQDAD) are enriched in low complexity. The tract at residues 1 to 74 (MPDAAAAAAA…AAPEPVSALL (74 aa)) is disordered. Over residues 32–60 (NNDDDGDDGTEEDEEEDDDEEGDEEELPP) the composition is skewed to acidic residues. The Tify domain maps to 74-109 (LPGSPNQLTLLFQGEVYVFESVTPEKVQAVLLLLGS). A CCT domain is found at 143–185 (RVASLIRFREKRKERNFDKKIRYAVRKEVALRMQRRKGQFAGR). Residues 215–242 (CQNCGTSEKMTPAMRRGPAGPRTLCNAC) form a GATA-type zinc finger. The tract at residues 292 to 319 (ITASHGEVMGDSTPANEAEIGAPKAQSQ) is disordered.

This sequence belongs to the type IV zinc-finger family. Class C subfamily.

It is found in the nucleus. In terms of biological role, transcriptional activator that specifically binds 5'-GATA-3' or 5'-GAT-3' motifs within gene promoters. The polypeptide is GATA transcription factor 18 (Oryza sativa subsp. indica (Rice)).